Here is a 277-residue protein sequence, read N- to C-terminus: 3-methyl-2-oxobutanoate hydroxymethyltransferase (277 aa).

Mg(2+)-binding residues include Asp-43 and Asp-82. Residues 43–44 (DS), Asp-82, and Lys-112 each bind 3-methyl-2-oxobutanoate. Mg(2+) is bound at residue Glu-114. Glu-181 functions as the Proton acceptor in the catalytic mechanism.

This sequence belongs to the PanB family. Homodecamer; pentamer of dimers. It depends on Mg(2+) as a cofactor.

Its subcellular location is the cytoplasm. It carries out the reaction 3-methyl-2-oxobutanoate + (6R)-5,10-methylene-5,6,7,8-tetrahydrofolate + H2O = 2-dehydropantoate + (6S)-5,6,7,8-tetrahydrofolate. The protein operates within cofactor biosynthesis; (R)-pantothenate biosynthesis; (R)-pantoate from 3-methyl-2-oxobutanoate: step 1/2. Its function is as follows. Catalyzes the reversible reaction in which hydroxymethyl group from 5,10-methylenetetrahydrofolate is transferred onto alpha-ketoisovalerate to form ketopantoate. This is 3-methyl-2-oxobutanoate hydroxymethyltransferase from Listeria monocytogenes serotype 4b (strain CLIP80459).